We begin with the raw amino-acid sequence, 297 residues long: 2-phospho-L-lactate transferase (297 aa).

Asp-49 is a binding site for 7,8-didemethyl-8-hydroxy-5-deazariboflavin.

It belongs to the CofD family. As to quaternary structure, homodimer. It depends on Mg(2+) as a cofactor.

The catalysed reaction is (2S)-lactyl-2-diphospho-5'-guanosine + 7,8-didemethyl-8-hydroxy-5-deazariboflavin = oxidized coenzyme F420-0 + GMP + H(+). It participates in cofactor biosynthesis; coenzyme F420 biosynthesis. Catalyzes the transfer of the 2-phospholactate moiety from (2S)-lactyl-2-diphospho-5'-guanosine to 7,8-didemethyl-8-hydroxy-5-deazariboflavin (FO) with the formation of oxidized coenzyme F420-0 and GMP. The sequence is that of 2-phospho-L-lactate transferase from Methanospirillum hungatei JF-1 (strain ATCC 27890 / DSM 864 / NBRC 100397 / JF-1).